Here is a 130-residue protein sequence, read N- to C-terminus: Small ribosomal subunit protein eS17 (130 aa).

Basic and acidic residues predominate over residues 74–84 (QEEERERRDNY). Residues 74–97 (QEEERERRDNYMPEISTVDPSQLT) are disordered.

This sequence belongs to the eukaryotic ribosomal protein eS17 family.

The protein is Small ribosomal subunit protein eS17 (rps-17) of Caenorhabditis elegans.